The sequence spans 901 residues: HTH-type transcriptional regulator MalT (901 aa).

39-46 is an ATP binding site; that stretch reads SPAGYGKT. Residues 829 to 894 enclose the HTH luxR-type domain; sequence ELIRTSPLTQ…AAVQHAQKLL (66 aa). The H-T-H motif DNA-binding region spans 853–872; the sequence is NEQIAGELEVAATTIKTHIR.

It belongs to the MalT family. In terms of assembly, monomer in solution. Oligomerizes to an active state in the presence of the positive effectors ATP and maltotriose.

Activated by ATP and maltotriose, which are both required for DNA binding. Functionally, positively regulates the transcription of the maltose regulon whose gene products are responsible for uptake and catabolism of malto-oligosaccharides. Specifically binds to the promoter region of its target genes, recognizing a short DNA motif called the MalT box. This Escherichia coli O7:K1 (strain IAI39 / ExPEC) protein is HTH-type transcriptional regulator MalT.